Reading from the N-terminus, the 117-residue chain is Ig lambda-1 chain V region (117 aa).

The N-terminal stretch at 1 to 20 (MAWISLILSLLALSSGGAIS) is a signal peptide. Gln21 is modified (pyrrolidone carboxylic acid). Residues 21–117 (QAVVTQESAL…YFCALWYSNH (97 aa)) enclose the Ig-like domain.

This Mus musculus (Mouse) protein is Ig lambda-1 chain V region.